The primary structure comprises 263 residues: Lens fiber major intrinsic protein (263 aa).

Topologically, residues 1 to 9 (MWELRSASF) are cytoplasmic. The helical transmembrane segment at 10 to 29 (WRAIFAEFFATLFYVFFGLG) threads the bilayer. Topologically, residues 30 to 41 (SSLRWAPGPLHV) are extracellular. Residues 42–59 (LQVAMAFGLALATLVQSV) traverse the membrane as a helical segment. Residues 60–61 (GH) are Cytoplasmic-facing. The discontinuously helical intramembrane region spans 62–77 (ISGAHVNPAVTFAFLV). The short motif at 68–70 (NPA) is the NPA 1 element. Topologically, residues 78–82 (GSQMS) are cytoplasmic. The chain crosses the membrane as a helical span at residues 83 to 106 (LLRAFCYMAAQLLGAVAGAAVLYS). At 107-127 (VTPPAVRGNLALNTLHPAVSV) the chain is on the extracellular side. Residues 128 to 148 (GQATTVEIFLTLQFVLCIFAT) traverse the membrane as a helical segment. The Cytoplasmic portion of the chain corresponds to 149–156 (YDERRNGQ). A helical membrane pass occupies residues 157–175 (LGSVALAVGFSLALGHLFG). At 176–178 (MYY) the chain is on the extracellular side. The segment at residues 179-193 (TGAGMNPARSFAPAI) is an intramembrane region (discontinuously helical). An NPA 2 motif is present at residues 184–186 (NPA). Residues 194–200 (LTGNFTN) are Extracellular-facing. A helical transmembrane segment spans residues 201 to 222 (HWVYWVGPIIGGGLGSLLYDFL). The Cytoplasmic portion of the chain corresponds to 223–263 (LFPRLKSISERLSVLKGAKPDVSNGQPEVTGEPVELNTQAL). The tract at residues 227–237 (LKSISERLSVL) is interaction with CALM. Residues Ser235 and Ser245 each carry the phosphoserine modification. 2 positions are modified to deamidated asparagine; by deterioration: Asn246 and Asn259.

It belongs to the MIP/aquaporin (TC 1.A.8) family. As to quaternary structure, homotetramer; each monomer provides an independent water pore. Two homotetramers on opposing membranes can dimerize, forming a cell-cell junction. Interacts with CALM; the calcium-calmodulin/CALM complex interacts with the cytoplasmic domains of two aquaporins, leading to channel closure. Interacts with BFSP1 (via C-terminus); prevents calcium-dependent inhibition of the water channel activity. In terms of processing, subject to partial proteolytic cleavage in the eye lens core. Partial proteolysis promotes interactions between tetramers from adjoining membranes. Fatty acylated at Met-1 and Lys-238. The acyl modifications, in decreasing order of ion abundance, are: oleoyl (C18:1) &gt; palmitoyl (C16:0) &gt; stearoyl (C18:0) &gt; eicosenoyl (C20:1) &gt; dihomo-gamma-linolenoyl (C20:3) &gt; palmitoleoyl (C16:1) &gt; eicosadienoyl (C20:2). In terms of tissue distribution, expressed in the cortex and nucleus of the retina lens (at protein level). Major component of lens fiber gap junctions.

The protein localises to the cell membrane. Its subcellular location is the cell junction. It catalyses the reaction H2O(in) = H2O(out). With respect to regulation, the water channel activity is inhibited by calcium through calmodulin/CALM. Functionally, aquaporins form homotetrameric transmembrane channels, with each monomer independently mediating water transport across the plasma membrane along its osmotic gradient. Specifically expressed in lens fiber cells, this aquaporin is crucial for maintaining lens water homeostasis and transparency. Beyond water permeability, it also acts as a cell-to-cell adhesion molecule, forming thin junctions between lens fiber cells that are essential for maintaining the ordered structure and transparency of the lens. In Homo sapiens (Human), this protein is Lens fiber major intrinsic protein.